We begin with the raw amino-acid sequence, 199 residues long: NAD(P)H dehydrogenase (quinone) (199 aa).

Positions 4–190 constitute a Flavodoxin-like domain; it reads ILVLYYSMYG…AIARFQGEHV (187 aa). FMN contacts are provided by residues 10–15 and 79–81; these read SMYGHI and TRF. Y12 contacts NAD(+). Position 99 (W99) interacts with substrate. Residues 114-119 and H134 each bind FMN; that span reads STGTGG.

Belongs to the WrbA family. Requires FMN as cofactor.

It carries out the reaction a quinone + NADH + H(+) = a quinol + NAD(+). The enzyme catalyses a quinone + NADPH + H(+) = a quinol + NADP(+). This Yersinia enterocolitica serotype O:8 / biotype 1B (strain NCTC 13174 / 8081) protein is NAD(P)H dehydrogenase (quinone).